We begin with the raw amino-acid sequence, 240 residues long: ATP-dependent Clp protease proteolytic subunit 2 (240 aa).

The active-site Nucleophile is the S132. Residue H157 is part of the active site.

This sequence belongs to the peptidase S14 family. Fourteen ClpP subunits assemble into 2 heptameric rings which stack back to back to give a disk-like structure with a central cavity, resembling the structure of eukaryotic proteasomes.

The protein resides in the cytoplasm. It carries out the reaction Hydrolysis of proteins to small peptides in the presence of ATP and magnesium. alpha-casein is the usual test substrate. In the absence of ATP, only oligopeptides shorter than five residues are hydrolyzed (such as succinyl-Leu-Tyr-|-NHMec, and Leu-Tyr-Leu-|-Tyr-Trp, in which cleavage of the -Tyr-|-Leu- and -Tyr-|-Trp bonds also occurs).. Cleaves peptides in various proteins in a process that requires ATP hydrolysis. Has a chymotrypsin-like activity. Plays a major role in the degradation of misfolded proteins. This chain is ATP-dependent Clp protease proteolytic subunit 2, found in Synechococcus elongatus (strain ATCC 33912 / PCC 7942 / FACHB-805) (Anacystis nidulans R2).